We begin with the raw amino-acid sequence, 377 residues long: Compound eye opsin BCRH2 (377 aa).

The Extracellular segment spans residues 1–53; it reads MTNATGPQMAYYGAASMDFGYPEGVSIVDFVRPEIKPYVHQHWYNYPPVNPMW. N-linked (GlcNAc...) asparagine glycosylation occurs at Asn-3. The chain crosses the membrane as a helical span at residues 54–78; it reads HYLLGVIYLFLGTVSIFGNGLVIYL. Over 79–90 the chain is Cytoplasmic; the sequence is FNKSAALRTPAN. A helical transmembrane segment spans residues 91–115; it reads ILVVNLALSDLIMLTTNVPFFTYNC. At 116-131 the chain is on the extracellular side; the sequence is FSGGVWMFSPQYCEIY. Residues Cys-128 and Cys-205 are joined by a disulfide bond. Residues 132-151 form a helical membrane-spanning segment; that stretch reads ACLGAITGVCSIWLLCMISF. The Cytoplasmic segment spans residues 152–170; it reads DRYNIICNGFNGPKLTTGK. The helical transmembrane segment at 171–194 threads the bilayer; sequence AVVFALISWVIAIGCALPPFFGWG. Residues 195 to 218 lie on the Extracellular side of the membrane; that stretch reads NYILEGILDSCSYDYLTQDFNTFS. A helical membrane pass occupies residues 219-246; sequence YNIFIFVFDYFLPAAIIVFSYVFIVKAI. At 247–281 the chain is on the cytoplasmic side; it reads FAHEAAMRAQAKKMNVSTLRSNEADAQRAEIRIAK. Residues 282–305 traverse the membrane as a helical segment; the sequence is TALVNVSLWFICWTPYALISLKGV. Over 306–313 the chain is Extracellular; that stretch reads MGDTSGIT. The chain crosses the membrane as a helical span at residues 314-338; the sequence is PLVSTLPALLAKSCSCYNPFVYAIS. Residue Lys-325 is modified to N6-(retinylidene)lysine. Residues 339–377 lie on the Cytoplasmic side of the membrane; the sequence is HPKYRLAITQHLPWFCVHETETKSNDDSQSNSTVAQDKA.

It belongs to the G-protein coupled receptor 1 family. Opsin subfamily. Phosphorylated on some or all of the serine and threonine residues present in the C-terminal region. Expressed in all of the seven retinular cells (R1-R7) forming the main rhabdom in each ommatidium.

It localises to the membrane. Its function is as follows. Visual pigments are the light-absorbing molecules that mediate vision. They consist of an apoprotein, opsin, covalently linked to cis-retinal. This opsin produces visual pigments with maximal absorption in the blue-green region of the spectrum. The sequence is that of Compound eye opsin BCRH2 from Hemigrapsus sanguineus (Asian shore crab).